The chain runs to 565 residues: Beta-hexosaminidase subunit beta (565 aa).

The first 13 residues, 1–13 (MIVLLLLISYCFA), serve as a signal peptide directing secretion. N-linked (GlcNAc...) asparagine glycosylation occurs at Asn71. Glu347 serves as the catalytic Proton donor.

Belongs to the glycosyl hydrolase 20 family. Heterodimer of one alpha subunit and one beta subunit. Glycosylated.

It is found in the cytoplasmic granule. Its subcellular location is the secreted. The enzyme catalyses Hydrolysis of terminal non-reducing N-acetyl-D-hexosamine residues in N-acetyl-beta-D-hexosaminides.. In terms of biological role, hydrolyzes the non-reducing end N-acetyl-D-hexosamine and/or sulfated N-acetyl-D-hexosamine of glycoconjugates. May contribute to amoebic pathogenicity and may be involved in the destruction of extracellular matrix components. The sequence is that of Beta-hexosaminidase subunit beta from Entamoeba histolytica (strain ATCC 30459 / HM-1:IMSS / ABRM).